The following is a 498-amino-acid chain: Protein flp (498 aa).

Transmembrane regions (helical) follow at residues 6 to 26 (LYFLSISIIILVAISIAIHIT), 389 to 409 (FNIVTVLMTTLILLAFIFSAY), 433 to 453 (LTLCLCIAIALILYALPYLIL), and 471 to 491 (LALITTLIALFSTLIVILLFL).

It localises to the cell membrane. Its function is as follows. Its precise function is unknown. Has no penicillin-binding activity and is not involved in methicillin resistance. The protein is Protein flp (flp) of Staphylococcus aureus (strain MW2).